Here is a 469-residue protein sequence, read N- to C-terminus: Ribosomal protein uS12 methylthiotransferase RimO (469 aa).

One can recognise an MTTase N-terminal domain in the interval 34–144 (NKIGFVSLGC…VLEHVHQFAP (111 aa)). Positions 43, 79, 108, 176, 180, and 183 each coordinate [4Fe-4S] cluster. Residues 162-399 (LTPKHYAYLK…MLVQQEISAA (238 aa)) enclose the Radical SAM core domain. A TRAM domain is found at 402–468 (QKRIGSTMKV…EYDLWGSLVR (67 aa)).

This sequence belongs to the methylthiotransferase family. RimO subfamily. Requires [4Fe-4S] cluster as cofactor.

Its subcellular location is the cytoplasm. It carries out the reaction L-aspartate(89)-[ribosomal protein uS12]-hydrogen + (sulfur carrier)-SH + AH2 + 2 S-adenosyl-L-methionine = 3-methylsulfanyl-L-aspartate(89)-[ribosomal protein uS12]-hydrogen + (sulfur carrier)-H + 5'-deoxyadenosine + L-methionine + A + S-adenosyl-L-homocysteine + 2 H(+). In terms of biological role, catalyzes the methylthiolation of an aspartic acid residue of ribosomal protein uS12. The chain is Ribosomal protein uS12 methylthiotransferase RimO from Vibrio vulnificus (strain CMCP6).